Reading from the N-terminus, the 395-residue chain is Mevalonate kinase (395 aa).

ATP is bound by residues K13, N55, N104, S135, and 140 to 146 (GAGLGSS). S146 acts as the Proton donor in catalysis. S146 and E193 together coordinate Mg(2+). Catalysis depends on D204, which acts as the Proton acceptor.

The protein belongs to the GHMP kinase family. Mevalonate kinase subfamily. Homodimer. Requires Mg(2+) as cofactor.

It localises to the cytoplasm. Its subcellular location is the peroxisome. The catalysed reaction is (R)-mevalonate + ATP = (R)-5-phosphomevalonate + ADP + H(+). It participates in isoprenoid biosynthesis; isopentenyl diphosphate biosynthesis via mevalonate pathway; isopentenyl diphosphate from (R)-mevalonate: step 1/3. Farnesyl pyrophosphate and geranyl pyrophosphate inhibit mevalonate kinase activity by binding competitively at the ATP-binding sites. Catalyzes the phosphorylation of mevalonate to mevalonate 5-phosphate, a key step in isoprenoid and cholesterol biosynthesis. In Mus musculus (Mouse), this protein is Mevalonate kinase.